A 699-amino-acid polypeptide reads, in one-letter code: Endogenous retrovirus group K member 19 Env polyprotein (699 aa).

The disordered stretch occupies residues 1-47 (MNPSEMQRKAPPRRRRHRNRAPLTHKMNKMVTSEEQMKLPSTKKAEP). An N-terminal signal peptide occupies residues 1-89 (MNPSEMQRKA…ALMIVSMVVS (89 aa)). The span at 10–20 (APPRRRRHRNR) shows a compositional bias: basic residues. Over 90–632 (LPMPAGAAAA…NLNPVTWVKT (543 aa)) the chain is Extracellular. N-linked (GlcNAc...) asparagine glycans are attached at residues N100, N128, N153, N274, N355, N372, and N461. Residues 466–486 (FIFTLIAVIMGLIAVTATAAV) are fusion peptide. 4 N-linked (GlcNAc...) asparagine glycosylation sites follow: N507, N554, N566, and N585. A helical transmembrane segment spans residues 633 to 653 (IGSTTIINLILILVCLFCLLL). Residues 654–699 (VCRCTQQLRRDSDHRERAMMTMAVLSKRKGGNVGKSKRDQIVTVSV) are Cytoplasmic-facing.

The protein belongs to the beta type-B retroviral envelope protein family. HERV class-II K(HML-2) env subfamily. As to quaternary structure, the surface (SU) and transmembrane (TM) proteins form a heterodimer. SU and TM are attached by noncovalent interactions or by a labile interchain disulfide bond. Specific enzymatic cleavages in vivo yield the mature SU and TM proteins.

It is found in the cell membrane. The protein localises to the virion. Retroviral envelope proteins mediate receptor recognition and membrane fusion during early infection. Endogenous envelope proteins may have kept, lost or modified their original function during evolution. This endogenous envelope protein has lost its original fusogenic properties. Functionally, SU mediates receptor recognition. In terms of biological role, TM anchors the envelope heterodimer to the viral membrane through one transmembrane domain. The other hydrophobic domain, called fusion peptide, mediates fusion of the viral membrane with the target cell membrane. The chain is Endogenous retrovirus group K member 19 Env polyprotein (ERVK-19) from Homo sapiens (Human).